Here is a 528-residue protein sequence, read N- to C-terminus: Chaperonin GroEL, chloroplastic (528 aa).

Residues 29–32 (TLGP), 86–90 (DGTTT), Gly-415, 481–483 (NAA), and Asp-497 contribute to the ATP site.

This sequence belongs to the chaperonin (HSP60) family. As to quaternary structure, forms a cylinder of 14 subunits composed of two heptameric rings stacked back-to-back. Interacts with the co-chaperonin GroES.

Its subcellular location is the plastid. The protein localises to the chloroplast. The enzyme catalyses ATP + H2O + a folded polypeptide = ADP + phosphate + an unfolded polypeptide.. Together with its co-chaperonin GroES, plays an essential role in assisting protein folding. The GroEL-GroES system forms a nano-cage that allows encapsulation of the non-native substrate proteins and provides a physical environment optimized to promote and accelerate protein folding. In Trieres chinensis (Marine centric diatom), this protein is Chaperonin GroEL, chloroplastic.